Consider the following 160-residue polypeptide: Surface-adhesin protein E (160 aa).

The signal sequence occupies residues 1–15 (MKKIILTLSLGLLTA). Cysteine 16 carries the N-palmitoyl cysteine lipid modification. Cysteine 16 carries S-diacylglycerol cysteine lipidation.

It is found in the cell outer membrane. The protein resides in the cell surface. Its function is as follows. Acts as a multifunctional adhesin involved in direct interactions with host epithelial cells and host proteins. In Haemophilus influenzae (strain ATCC 51907 / DSM 11121 / KW20 / Rd), this protein is Surface-adhesin protein E (pe).